The primary structure comprises 436 residues: MQPVVETLSGLERRVDLAVSVAEVEKEVQAQLKRVGRTAKVAGFRPGKAPLAMLERSHGPGIRYDVINSLVGRAFEQAVDGAKLRVAGSPTLTPKTEGVADDTLAFTATFEVYPEVTVPDLSALAVTRYDTPVTDAEVNQTLDVLRKQRAKFETREGRASQDGDRVVLDFAGTIDGVPFEGGKAEDFPFVLGQGRMLPEFEEAALGLKAGESKVFPLKFPDDYQGKEVAGKTAEFTVTVKEVAEGVLPEVDAEFAKSLGQAEGDVEKLKADIRTNIEREVKARLQGRTKGSVMDALVEAGKFDVPKALVDSDVEGRIAAAREELKQRGVPNADSVPMPAEVFSTESERRVRLGLLVSELVKQAQLQAKPEQVRARIEEFAQNYEQPAQVVSYYLADRQRRAEIEAIVLEDNVVAHVLENAKVADEKVPFDQLMGMA.

Positions 163 to 248 constitute a PPIase FKBP-type domain; sequence GDRVVLDFAG…VKEVAEGVLP (86 aa).

It belongs to the FKBP-type PPIase family. Tig subfamily.

The protein localises to the cytoplasm. It catalyses the reaction [protein]-peptidylproline (omega=180) = [protein]-peptidylproline (omega=0). In terms of biological role, involved in protein export. Acts as a chaperone by maintaining the newly synthesized protein in an open conformation. Functions as a peptidyl-prolyl cis-trans isomerase. This Bordetella parapertussis (strain 12822 / ATCC BAA-587 / NCTC 13253) protein is Trigger factor.